Here is a 458-residue protein sequence, read N- to C-terminus: MQAEPKKSQAEQRAVAEPVSEPVSLVGEEYEVEVGPVAHGGHCIARTSEGQVLFVRHTLPGERVVARVTEGEEGARFLRADAVEILDPSKDRIEAPCPFAGPGRCGGCDWQHAKPGAQRRLKGEVVAEQLQRLAGLTPEEAGWDGTVMPAEGDKLPAGQVPSWRTRVQFAVDADGRAGLRRHRSHEIEPIDHCMIAAEGVSELGIERRDWPGMATVEAIAATGSQDRQVILTPRPGARLPIVELDRPVSVMRVGEKDGGVHRVHGRPFVRERADDRTYRVGSGGFWQVHPKAADTLVTAVMQGLLPRKGDMALDLYCGVGLFAGALADRVGDQGAVLGIESGKRAVEDARHNLAAFDRVRIEQGKVESVLPRTGIDEVDLIVLDPPRAGAGRKTVQHLSTLGARRIAYVACDPAALARDLGYFQDGGYRVRTLRVFDLFPMTAHVECVAILEPAAKGL.

Residues 1-10 (MQAEPKKSQA) show a composition bias toward basic and acidic residues. The interval 1-20 (MQAEPKKSQAEQRAVAEPVS) is disordered. The region spanning 23 to 84 (VSLVGEEYEV…ARFLRADAVE (62 aa)) is the TRAM domain. [4Fe-4S] cluster is bound by residues C97, C105, C108, and C193. 4 residues coordinate S-adenosyl-L-methionine: Q287, Y316, E340, and D384. The active-site Nucleophile is the C411.

The protein belongs to the class I-like SAM-binding methyltransferase superfamily. RNA M5U methyltransferase family.

This is an uncharacterized protein from Streptomyces coelicolor (strain ATCC BAA-471 / A3(2) / M145).